A 608-amino-acid polypeptide reads, in one-letter code: Protein SHQ1 homolog (608 aa).

2 disordered regions span residues 487 to 531 and 543 to 608; these read DAGS…SFYS and IVYE…ASTT. Residues 489–498 are compositionally biased toward low complexity; the sequence is GSQGSSPQQQ. Acidic residues-rich tracts occupy residues 502–524 and 543–579; these read DDLD…DESV and IVYE…EDDS. Over residues 588 to 608 the composition is skewed to polar residues; it reads EAEGNSVIEQCSNSETAASTT.

Belongs to the SHQ1 family.

Required for the quantitative accumulation of H/ACA ribonucleoproteins (RNPs). The protein is Protein SHQ1 homolog of Drosophila melanogaster (Fruit fly).